A 412-amino-acid chain; its full sequence is Enhancer of translation termination 1 (412 aa).

The tract at residues 1–45 is disordered; sequence MAKRPLGLGKQSREKKRKVESVEKKSDEPSRESTPVRSQMSVELD. Over residues 17 to 31 the composition is skewed to basic and acidic residues; it reads RKVESVEKKSDEPSR. Position 30 is a phosphoserine (Ser-30). Over residues 32 to 41 the composition is skewed to polar residues; that stretch reads ESTPVRSQMS.

This sequence belongs to the ETT1 family. As to quaternary structure, interacts with STM1.

The protein resides in the nucleus. In terms of biological role, required for correct translation termination and probably involved in regulation of hypoxic gene expression in association TPA1. Inhibits replication of Brome mosaic virus. This chain is Enhancer of translation termination 1 (ETT1), found in Saccharomyces cerevisiae (strain JAY291) (Baker's yeast).